The primary structure comprises 218 residues: UPF0502 protein CJA_1529 (218 aa).

This sequence belongs to the UPF0502 family.

This is UPF0502 protein CJA_1529 from Cellvibrio japonicus (strain Ueda107) (Pseudomonas fluorescens subsp. cellulosa).